A 609-amino-acid polypeptide reads, in one-letter code: Isopenicillin N epimerase component 1 (609 aa).

Position 185–196 (185–196 (MLSGSGTTGLPK)) interacts with AMP. The interval 545–570 (STDNHKHNKVPLRDEGVDPRSMGSKV) is disordered.

It belongs to the ATP-dependent AMP-binding enzyme family.

It carries out the reaction isopenicillin N = penicillin N. It participates in antibiotic biosynthesis; cephalosporin C biosynthesis. Together with cefD2, catalyzes the reversible isomerization between isopenicillin N and penicillin N. This two-component IPN epimerase system may function by two sequential steps, an activation of isopenicillin N by the acyl-CoA synthase component cefD1, followed by epimerization by the acyl-CoA racemase component cefD2. This is Isopenicillin N epimerase component 1 (cefD1) from Hapsidospora chrysogena (Acremonium chrysogenum).